A 460-amino-acid chain; its full sequence is Retinoic acid receptor alpha (460 aa).

The segment at 1-87 is modulating; it reads MASNSSSCPT…PPPLPRIYKP (87 aa). The interval 46–78 is disordered; the sequence is HQLPVSGYSTPSPATVETQSTSSEEIVPSPPSP. Residues 52–69 are compositionally biased toward polar residues; it reads GYSTPSPATVETQSTSSE. NR C4-type zinc fingers lie at residues 88–108 and 124–148; these read CFVCQDKSSGYHYGVSACEGC and CHRDKNCIINKVTRNRCQYCRLQKC. Residues 88–153 constitute a DNA-binding region (nuclear receptor); it reads CFVCQDKSSG…RLQKCFEVGM (66 aa). Positions 154 to 182 are hinge; that stretch reads SKESVRNDRNKKKKDVPKTECSESYIVTP. One can recognise an NR LBD domain in the interval 183–417; that stretch reads EVEELIEKVR…PLIQEMLENS (235 aa). Positions 408–416 match the 9aaTAD motif; sequence PLIQEMLEN. The interval 418-460 is disordered; that stretch reads EGMDTLGGQPGGPRTGGLGPPPGSCSPSLSPSSTRSSPATHSP. Residues 425-435 show a composition bias toward gly residues; it reads GQPGGPRTGGL. The span at 442–460 shows a compositional bias: low complexity; the sequence is CSPSLSPSSTRSSPATHSP.

This sequence belongs to the nuclear hormone receptor family. NR1 subfamily. As to quaternary structure, heterodimer; with an RXR molecule. Binds DNA preferentially as a RAR/RXR heterodimer. In terms of tissue distribution, ubiquitous.

It localises to the nucleus. In terms of biological role, receptor for retinoic acid. Retinoic acid receptors bind as heterodimers to their target response elements in response to their ligands, all-trans or 9-cis retinoic acid, and regulate gene expression in various biological processes. The RAR/RXR heterodimers bind to the retinoic acid response elements (RARE) composed of tandem 5'-AGGTCA-3' sites known as DR1-DR5. Required for hindbrain patterning and appears to be required for skin development. This chain is Retinoic acid receptor alpha (RARA), found in Gallus gallus (Chicken).